The following is a 901-amino-acid chain: Protein translocase subunit SecA (901 aa).

ATP is bound by residues Q87, 105-109, and D512; that span reads GEGKT. Zn(2+)-binding residues include C885, C887, C896, and H897.

This sequence belongs to the SecA family. As to quaternary structure, monomer and homodimer. Part of the essential Sec protein translocation apparatus which comprises SecA, SecYEG and auxiliary proteins SecDF-YajC and YidC. It depends on Zn(2+) as a cofactor.

It is found in the cell inner membrane. Its subcellular location is the cytoplasm. It carries out the reaction ATP + H2O + cellular proteinSide 1 = ADP + phosphate + cellular proteinSide 2.. Functionally, part of the Sec protein translocase complex. Interacts with the SecYEG preprotein conducting channel. Has a central role in coupling the hydrolysis of ATP to the transfer of proteins into and across the cell membrane, serving both as a receptor for the preprotein-SecB complex and as an ATP-driven molecular motor driving the stepwise translocation of polypeptide chains across the membrane. This chain is Protein translocase subunit SecA, found in Salmonella schwarzengrund (strain CVM19633).